We begin with the raw amino-acid sequence, 578 residues long: Rhamnogalacturonate lyase (578 aa).

A signal peptide spans 1–27; it reads MHMNKPLQAWRTPLLTLIFVLPLTATG.

It belongs to the polysaccharide lyase 4 family.

The protein localises to the secreted. The catalysed reaction is Endotype eliminative cleavage of L-alpha-rhamnopyranosyl-(1-&gt;4)-alpha-D-galactopyranosyluronic acid bonds of rhamnogalacturonan I domains in ramified hairy regions of pectin leaving L-rhamnopyranose at the reducing end and 4-deoxy-4,5-unsaturated D-galactopyranosyluronic acid at the non-reducing end.. Its function is as follows. Degrades the rhamnogalacturonan I (RG-I) backbone of pectin. Is required for the full virulence of E.chrysanthemi strain 3937 as it is involved in rotting of plant tissue. The protein is Rhamnogalacturonate lyase (rhiE) of Dickeya dadantii (strain 3937) (Erwinia chrysanthemi (strain 3937)).